Here is a 560-residue protein sequence, read N- to C-terminus: DNA ligase B (560 aa).

The active-site N6-AMP-lysine intermediate is Lys124.

The protein belongs to the NAD-dependent DNA ligase family. LigB subfamily.

The catalysed reaction is NAD(+) + (deoxyribonucleotide)n-3'-hydroxyl + 5'-phospho-(deoxyribonucleotide)m = (deoxyribonucleotide)n+m + AMP + beta-nicotinamide D-nucleotide.. Its function is as follows. Catalyzes the formation of phosphodiester linkages between 5'-phosphoryl and 3'-hydroxyl groups in double-stranded DNA using NAD as a coenzyme and as the energy source for the reaction. In Citrobacter koseri (strain ATCC BAA-895 / CDC 4225-83 / SGSC4696), this protein is DNA ligase B.